A 425-amino-acid chain; its full sequence is Putative chloroquine resistance transporter (425 aa).

Residues methionine 1–asparagine 56 are Cytoplasmic-facing. A helical transmembrane segment spans residues valine 57–alanine 77. The Vacuolar portion of the chain corresponds to lysine 78–serine 88. A glycan (N-linked (GlcNAc...) asparagine) is linked at asparagine 86. The chain crosses the membrane as a helical span at residues phenylalanine 89 to isoleucine 109. At tyrosine 110–asparagine 126 the chain is on the cytoplasmic side. A helical transmembrane segment spans residues phenylalanine 127–isoleucine 147. Over glycine 148–glutamine 157 the chain is Vacuolar. Residues serine 158–tyrosine 178 traverse the membrane as a helical segment. The Cytoplasmic portion of the chain corresponds to arginine 179–histidine 181. Residues leucine 182 to leucine 202 traverse the membrane as a helical segment. Over serine 203–asparagine 210 the chain is Vacuolar. A helical transmembrane segment spans residues serine 211 to threonine 231. Over arginine 232 to methionine 249 the chain is Cytoplasmic. A helical membrane pass occupies residues valine 250 to leucine 270. Over lysine 271 to lysine 318 the chain is Vacuolar. Disulfide bonds link cysteine 290-cysteine 313 and cysteine 302-cysteine 310. The chain crosses the membrane as a helical span at residues threonine 319–aspartate 339. Residues lysine 340 to threonine 347 lie on the Cytoplasmic side of the membrane. A helical transmembrane segment spans residues isoleucine 348 to glycine 368. Residues aspartate 369–aspartate 378 are Vacuolar-facing. Residues phenylalanine 379–leucine 399 traverse the membrane as a helical segment. The Cytoplasmic portion of the chain corresponds to glutamate 400–alanine 425.

The protein belongs to the CRT-like transporter family.

It is found in the vacuole membrane. Nutrient transporter. Involved in maintaining the osmotic homeostasis of the digestive vacuole. This is Putative chloroquine resistance transporter from Plasmodium berghei.